Consider the following 153-residue polypeptide: MAGEVYLLWLLPLLQGLASYGAELSSEACRELGFSSNLLCSSCELLGQFSLNQLDLPCRQCCQEEAQLENRKLYPGAILEVCGUKLGRFPQVQAFVRSDKPKLFRGLQIKYVRGSDPVLKLLDDNGNIAEELSILKWNTDSVEEFLSEKLERI.

The first 19 residues, 1 to 19 (MAGEVYLLWLLPLLQGLAS), serve as a signal peptide directing secretion. Residue U84 is a non-standard amino acid, selenocysteine.

Belongs to the selenoprotein M/F family. In terms of tissue distribution, higher levels in polster, prechordal plate, axis, otic vesicle and somites. Lower levels in fin buds.

The protein resides in the endoplasmic reticulum lumen. Functionally, may be involved in redox reactions associated with the formation of disulfide bonds. May contribute to the quality control of protein folding in the endoplasmic reticulum. This is Selenoprotein F from Danio rerio (Zebrafish).